The sequence spans 344 residues: Biotin synthase (344 aa).

The region spanning 40 to 267 (AEVQVSTLLS…KSMVRLSAGR (228 aa)) is the Radical SAM core domain. 3 residues coordinate [4Fe-4S] cluster: C55, C59, and C62. 4 residues coordinate [2Fe-2S] cluster: C99, C130, C190, and R262.

This sequence belongs to the radical SAM superfamily. Biotin synthase family. As to quaternary structure, homodimer. It depends on [4Fe-4S] cluster as a cofactor. [2Fe-2S] cluster is required as a cofactor.

The enzyme catalyses (4R,5S)-dethiobiotin + (sulfur carrier)-SH + 2 reduced [2Fe-2S]-[ferredoxin] + 2 S-adenosyl-L-methionine = (sulfur carrier)-H + biotin + 2 5'-deoxyadenosine + 2 L-methionine + 2 oxidized [2Fe-2S]-[ferredoxin]. Its pathway is cofactor biosynthesis; biotin biosynthesis; biotin from 7,8-diaminononanoate: step 2/2. Functionally, catalyzes the conversion of dethiobiotin (DTB) to biotin by the insertion of a sulfur atom into dethiobiotin via a radical-based mechanism. The sequence is that of Biotin synthase from Xanthomonas campestris pv. campestris (strain 8004).